Reading from the N-terminus, the 666-residue chain is Hybrid PKS-NRPS synthetase pytA (666 aa).

A Ketosynthase family 3 (KS3) domain is found at 1 to 340 (MDPQQRLLLE…GTNAHAILEE (340 aa)). Residues Cys87, His222, and His260 each act as for beta-ketoacyl synthase activity in the active site. Residues 455–665 (VFTGQGAQWF…VFVHSLVIKR (211 aa)) form a malonyl-CoA:ACP transacylase (MAT) domain region. The active-site For malonyltransferase activity is Ser548.

It in the C-terminal section; belongs to the NRP synthetase family.

Its pathway is secondary metabolite biosynthesis. Functionally, hybrid PKS-NRPS synthetase; part of the gene cluster that mediates the biosynthesis of pyranterreones, a family of antioxidative compounds. The first step of pyranonigrins biosynthesis is performed by the hybrid PKS-NRPS synthetase pytA that condenses 4 malonyl-CoA units ato the acetyl starter unit by the modular PKS of pytA. The acyl chain is then connected to an L-serine through the amide bond by the modular NRPS of pytA. A tetramic acid is formed and released from the PKS-NRPS pytA to give pyranterreone 5 with the help of the thioesterase pytI. Pyranterreone 5 could be methylated by pytC to afford pyranterreone 6. Both pyranterreones 5 and 6 are subsequently oxidized by the FAD-linked oxidoreductase pytB and the cytochrome P450 monooxygenase pytD to form the fused gamma-pyrone core, resulting in pyranterreones 7 and 11, respectively. The hydroxy group at C-8 of pyranterreones 7 and 11 are dehydrated by the aspartyl protease pytH to form a delta-7 double bond to give pyranterreones 3 and 1, 2 accordingly. The exo-methylene of pyranterreone 3 could be reduced into a pendant methyl by reductase pytE to provide pyranterreone 4, also known as cordylactam. Pyranterreone 4 can be reconverted to pyranterreone 3 through pytB-catalyzed dehydrogenation or further oxidized to pyranterreones 9 and 10. This Aspergillus terreus (strain NIH 2624 / FGSC A1156) protein is Hybrid PKS-NRPS synthetase pytA.